The chain runs to 162 residues: Cytochrome c-type biogenesis protein CcmE (162 aa).

Residues 1-8 (MNPVRKKR) are Cytoplasmic-facing. Residues 9–29 (LIIVLAIVVGVGAAVGLALSA) form a helical; Signal-anchor for type II membrane protein membrane-spanning segment. The Periplasmic portion of the chain corresponds to 30 to 162 (LQQNINLFYT…GETSYNQEGK (133 aa)). His-124 and Tyr-128 together coordinate heme. The segment covering 139 to 148 (DSGQLKHYEN) has biased composition (basic and acidic residues). Residues 139-162 (DSGQLKHYENGKAAGETSYNQEGK) form a disordered region.

Belongs to the CcmE/CycJ family.

The protein localises to the cell inner membrane. Functionally, heme chaperone required for the biogenesis of c-type cytochromes. Transiently binds heme delivered by CcmC and transfers the heme to apo-cytochromes in a process facilitated by CcmF and CcmH. This is Cytochrome c-type biogenesis protein CcmE from Pseudomonas aeruginosa (strain LESB58).